The primary structure comprises 305 residues: Ribosomal RNA small subunit methyltransferase H (305 aa).

Residues 46–48 (GGH), Asp65, Phe92, Asp108, and His115 contribute to the S-adenosyl-L-methionine site.

Belongs to the methyltransferase superfamily. RsmH family.

Its subcellular location is the cytoplasm. It catalyses the reaction cytidine(1402) in 16S rRNA + S-adenosyl-L-methionine = N(4)-methylcytidine(1402) in 16S rRNA + S-adenosyl-L-homocysteine + H(+). Its function is as follows. Specifically methylates the N4 position of cytidine in position 1402 (C1402) of 16S rRNA. The protein is Ribosomal RNA small subunit methyltransferase H of Trichormus variabilis (strain ATCC 29413 / PCC 7937) (Anabaena variabilis).